We begin with the raw amino-acid sequence, 444 residues long: Vacuolar protein sorting-associated protein 4B (444 aa).

Positions T4–K82 constitute an MIT domain. Residues A19–K82 adopt a coiled-coil conformation. Positions K77–N118 are disordered. Residues P86 to D101 are compositionally biased toward basic and acidic residues. Phosphoserine is present on residues S102 and S108. G174–S181 contacts ATP. The residue at position 410 (S410) is a Phosphoserine.

This sequence belongs to the AAA ATPase family. In terms of assembly, proposed to be monomeric or homodimeric in nucleotide-free form and to oligomerize upon binding to ATP to form two stacked hexameric or heptameric rings with a central pore through which ESCRT-III substrates are translocated in an ATP-dependent manner. In vitro, associates on the inside of a helical tubular structure formed by a CHMP2A-CHMP3 polymer. Interacts with CHMP1A, CHMP1B, CHMP4B and CHMP6. Interacts with CHMP2A. Interacts with VPS4A; the interaction suggests a heteromeric assembly with VPS4A. Interacts with VTA1. As to expression, high level expression seen in the kidney. It is also expressed in the heart, brain, spleen, lung, liver, skeletal muscle, and testis.

The protein resides in the late endosome membrane. The enzyme catalyses ATP + H2O = ADP + phosphate + H(+). In terms of biological role, involved in late steps of the endosomal multivesicular bodies (MVB) pathway. Recognizes membrane-associated ESCRT-III assemblies and catalyzes their disassembly, possibly in combination with membrane fission. Redistributes the ESCRT-III components to the cytoplasm for further rounds of MVB sorting. MVBs contain intraluminal vesicles (ILVs) that are generated by invagination and scission from the limiting membrane of the endosome and mostly are delivered to lysosomes enabling degradation of membrane proteins, such as stimulated growth factor receptors, lysosomal enzymes and lipids. VPS4A/B are required for the exosomal release of SDCBP, CD63 and syndecan. Functionally, (Microbial infection) In conjunction with the ESCRT machinery also appears to function in topologically equivalent membrane fission events, such as the terminal stages of cytokinesis and enveloped virus budding (lentiviruses). The chain is Vacuolar protein sorting-associated protein 4B from Mus musculus (Mouse).